The following is a 1213-amino-acid chain: Oligopeptidase PhomG' (1213 aa).

H447 is a binding site for Zn(2+). Residue E448 is part of the active site. Residues H451 and H454 each coordinate Zn(2+).

This sequence belongs to the peptidase M3 family. As to quaternary structure, monomer. Zn(2+) serves as cofactor.

It participates in mycotoxin biosynthesis. In terms of biological role, oligopeptidase; part of the gene cluster that mediates the biosynthesis of the phomopsins, a group of hexapeptide mycotoxins which infects lupins and causes lupinosis disease in livestock. Within the pathway, phomG and phomG' are probably involved in the processing of the phomA and phomA' precursors. The pathway starts with the processing of the precursor phomA by several endopeptidases including kexin proteases as well as the cluster-specific S41 family peptidase phomP1 and the oligopeptidase phomG to produce 10 identical copies of the hexapeptide Tyr-Val-Ile-Pro-Ile-Asp. After being excised from the precursor peptide, the core peptides are cyclized and modified post-translationally by enzymes encoded within the gene cluster. The timing and order of proteolysis of the phomA precursor and PTMs are still unknown. Two tyrosinase-like enzymes, phomQ1 and phomQ2, catalyze the chlorination and hydroxylation of Tyr, respectively. PhomYb, is proposed to be involved in the construction of the macrocyclic structure. The other 4 ustYa family proteins may be involved in PTMs that generate the unique structure of phomopsin A. PhomYa is required for the hydroxylation of C-beta of Tyr. PhomYc, phomYd, and phomYe are responsible for the biosynthesis of 2,3-dehydroisoleucine (dIle), 2,3-dehydroaspartic acid (dAsp), and 3,4-dehydroproline (dPro), respectively. While dIle formation by phomYc is indispensable for the installation of dAsp by phomYd, the order of the other PTMs have not been elucidated yet. Most of the biosynthetic enzymes likely have broad substrate specificity, and thus, there might be a metabolic grid from a precursor to phomopsin A. The enzyme(s) responsible for the biosynthesis of 3,4-dehydrovaline (dVal) have also not been identified yet. Finally, phomM acts as an S-adenosylmethionine-dependent alpha-N-methyltransferase that catalyzes two successive N-methylation reactions, converting N-desmethyl-phomopsin A to phomopsin A and phomopsin A further to an N,N-dimethylated congener called phomopsin E. The protein is Oligopeptidase PhomG' of Diaporthe leptostromiformis (Lupinosis disease fungus).